A 129-amino-acid polypeptide reads, in one-letter code: KVYGRCELAAAMKRLGLDNYRGYSLGNWVCAAKFESNFNTHATNRNTDGSTDYGILQINSRWWCNDGRTPGSRNLCHISCSALLSSDITASVNCAKKIVSDRNGMNAWVAWRNRCKGTDVNAWIRGCRL.

Positions 1 to 129 (KVYGRCELAA…VNAWIRGCRL (129 aa)) constitute a C-type lysozyme domain. 4 disulfide bridges follow: Cys-6/Cys-127, Cys-30/Cys-115, Cys-64/Cys-80, and Cys-76/Cys-94. Catalysis depends on residues Glu-35 and Asp-52.

The protein belongs to the glycosyl hydrolase 22 family. As to quaternary structure, monomer.

The protein localises to the secreted. It catalyses the reaction Hydrolysis of (1-&gt;4)-beta-linkages between N-acetylmuramic acid and N-acetyl-D-glucosamine residues in a peptidoglycan and between N-acetyl-D-glucosamine residues in chitodextrins.. In terms of biological role, lysozymes have primarily a bacteriolytic function; those in tissues and body fluids are associated with the monocyte-macrophage system and enhance the activity of immunoagents. The chain is Lysozyme C (LYZ) from Syrmaticus reevesii (Reeves's pheasant).